The chain runs to 452 residues: UDP-N-acetylmuramoylalanine--D-glutamate ligase (452 aa).

119-125 (GSNGKTT) provides a ligand contact to ATP.

Belongs to the MurCDEF family.

It is found in the cytoplasm. The catalysed reaction is UDP-N-acetyl-alpha-D-muramoyl-L-alanine + D-glutamate + ATP = UDP-N-acetyl-alpha-D-muramoyl-L-alanyl-D-glutamate + ADP + phosphate + H(+). Its pathway is cell wall biogenesis; peptidoglycan biosynthesis. Functionally, cell wall formation. Catalyzes the addition of glutamate to the nucleotide precursor UDP-N-acetylmuramoyl-L-alanine (UMA). This Streptococcus equi subsp. zooepidemicus (strain MGCS10565) protein is UDP-N-acetylmuramoylalanine--D-glutamate ligase.